The primary structure comprises 383 residues: Chorismate synthase (383 aa).

NADP(+) contacts are provided by arginine 39 and arginine 45. FMN-binding positions include 128 to 130 (RAS), glycine 291, 306 to 310 (KPIAT), and arginine 332.

The protein belongs to the chorismate synthase family. Homotetramer. It depends on FMNH2 as a cofactor.

It catalyses the reaction 5-O-(1-carboxyvinyl)-3-phosphoshikimate = chorismate + phosphate. It functions in the pathway metabolic intermediate biosynthesis; chorismate biosynthesis; chorismate from D-erythrose 4-phosphate and phosphoenolpyruvate: step 7/7. Its function is as follows. Catalyzes the anti-1,4-elimination of the C-3 phosphate and the C-6 proR hydrogen from 5-enolpyruvylshikimate-3-phosphate (EPSP) to yield chorismate, which is the branch point compound that serves as the starting substrate for the three terminal pathways of aromatic amino acid biosynthesis. This reaction introduces a second double bond into the aromatic ring system. This chain is Chorismate synthase, found in Thermus thermophilus (strain ATCC 27634 / DSM 579 / HB8).